Reading from the N-terminus, the 193-residue chain is Ribosomal RNA large subunit methyltransferase E (193 aa).

S-adenosyl-L-methionine is bound by residues Gly51, Trp53, Asp69, Asp85, and Asp108. Lys148 acts as the Proton acceptor in catalysis.

This sequence belongs to the class I-like SAM-binding methyltransferase superfamily. RNA methyltransferase RlmE family.

Its subcellular location is the cytoplasm. It carries out the reaction uridine(2552) in 23S rRNA + S-adenosyl-L-methionine = 2'-O-methyluridine(2552) in 23S rRNA + S-adenosyl-L-homocysteine + H(+). In terms of biological role, specifically methylates the uridine in position 2552 of 23S rRNA at the 2'-O position of the ribose in the fully assembled 50S ribosomal subunit. The protein is Ribosomal RNA large subunit methyltransferase E of Methanoregula boonei (strain DSM 21154 / JCM 14090 / 6A8).